Here is a 121-residue protein sequence, read N- to C-terminus: Large ribosomal subunit protein eL18 (121 aa).

This sequence belongs to the eukaryotic ribosomal protein eL18 family. In terms of assembly, part of the 50S ribosomal subunit.

The chain is Large ribosomal subunit protein eL18 from Thermococcus kodakarensis (strain ATCC BAA-918 / JCM 12380 / KOD1) (Pyrococcus kodakaraensis (strain KOD1)).